The primary structure comprises 213 residues: Uracil phosphoribosyltransferase (213 aa).

5-phospho-alpha-D-ribose 1-diphosphate is bound by residues Arg78, Arg103, and 131 to 139 (DPMLATGGT). Residues Ile197 and 202–204 (GDA) contribute to the uracil site. Asp203 contributes to the 5-phospho-alpha-D-ribose 1-diphosphate binding site.

The protein belongs to the UPRTase family. Mg(2+) is required as a cofactor.

The catalysed reaction is UMP + diphosphate = 5-phospho-alpha-D-ribose 1-diphosphate + uracil. It functions in the pathway pyrimidine metabolism; UMP biosynthesis via salvage pathway; UMP from uracil: step 1/1. Its activity is regulated as follows. Allosterically activated by GTP. Functionally, catalyzes the conversion of uracil and 5-phospho-alpha-D-ribose 1-diphosphate (PRPP) to UMP and diphosphate. The protein is Uracil phosphoribosyltransferase of Bifidobacterium adolescentis (strain ATCC 15703 / DSM 20083 / NCTC 11814 / E194a).